A 91-amino-acid polypeptide reads, in one-letter code: Acylphosphatase (91 aa).

The region spanning Trp5 to Phe91 is the Acylphosphatase-like domain. Active-site residues include Arg20 and Asn38.

This sequence belongs to the acylphosphatase family.

It catalyses the reaction an acyl phosphate + H2O = a carboxylate + phosphate + H(+). In Fervidobacterium nodosum (strain ATCC 35602 / DSM 5306 / Rt17-B1), this protein is Acylphosphatase (acyP).